Here is a 346-residue protein sequence, read N- to C-terminus: 2,5-dichlorohydroquinone reductive dechlorinase (346 aa).

A GST N-terminal domain is found at 43-154 (PRFELFHFVF…YLCDALSGGT (112 aa)). The GST C-terminal domain maps to 189-335 (DRRPESMQAV…AIIQWPGHPP (147 aa)).

Belongs to the GST superfamily.

It catalyses the reaction 2,5-dichlorohydroquinone + 2 glutathione = chlorohydroquinone + glutathione disulfide + chloride + H(+). The catalysed reaction is chlorohydroquinone + 2 glutathione = hydroquinone + glutathione disulfide + chloride + H(+). It functions in the pathway xenobiotic degradation; gamma-hexachlorocyclohexane degradation. Its function is as follows. Catalyzes the degradation of 2,5-dichlorohydroquinone (2,5-DCHQ) into hydroquinone (HQ) via chlorohydroquinone (CHQ). The sequence is that of 2,5-dichlorohydroquinone reductive dechlorinase from Sphingobium indicum (strain DSM 16412 / CCM 7286 / MTCC 6364 / B90A).